Consider the following 236-residue polypeptide: Ubiquinone biosynthesis O-methyltransferase (236 aa).

S-adenosyl-L-methionine contacts are provided by arginine 36, glycine 56, aspartate 77, and methionine 125.

Belongs to the methyltransferase superfamily. UbiG/COQ3 family.

The catalysed reaction is a 3-demethylubiquinol + S-adenosyl-L-methionine = a ubiquinol + S-adenosyl-L-homocysteine + H(+). It catalyses the reaction a 3-(all-trans-polyprenyl)benzene-1,2-diol + S-adenosyl-L-methionine = a 2-methoxy-6-(all-trans-polyprenyl)phenol + S-adenosyl-L-homocysteine + H(+). It participates in cofactor biosynthesis; ubiquinone biosynthesis. In terms of biological role, O-methyltransferase that catalyzes the 2 O-methylation steps in the ubiquinone biosynthetic pathway. The chain is Ubiquinone biosynthesis O-methyltransferase from Haemophilus ducreyi (strain 35000HP / ATCC 700724).